An 808-amino-acid chain; its full sequence is MNKTIIINNVSKYIKFKNYYSSSSTILKKKTSEIYKIKGLDIKDRKELYSLNNDSIKKKLNQLKDETNQLLKERGEELMKDLSKTLNLTSDNLKYNITKSPFTLRAYLLAANQGISFYHHELRKQINPTDDYERQKRKDLVYKLQSQEIDSLTSGGANKKKSPFLEDNNNKKSMSIEREMEIIREQQQEQQHFDQQMSNSTKWEMSQLEIQPRIDTFRQDELFVSFNPYESMSTNSQSYQLVSRLSKFVWNKELTNWEMFSSSKLNQLIPQLQLHILDKINLNNDNDNDNSIIINQFLESIKFISNEINSTDLNIFKTLNSSNNNNNSSENIIEVENGGDFKKIINNSIVDSLIYMKGHHFRITSDPFILFFQQLKENQDYFTSNEDYKQFLEKLLDTLLFETIEFDPTSTTTINGNRQFEYKLKLDLLQREAFRQFKVYQVFNTSPDAKRHEESDLRKLAHLCKTLQKRSTSDFIQESKKYLSPQILSNGLLNSNKLLVATSSSNELNQSKTSISISQLTDGLHSCIPATMSLLEFSIKNSSKDNILFDTFDGKLKNINSLDDLITKFANSKYIYLRESLSQRFSMFIQSSNNTTDNNTTTDTNDNDIIIGLNNPIYKLLIDLEDKVLELSQNNFEENPIENWIGCLSIELGDEDDNIEYKDTDQFNVIASQNFNLVRINNQMLAQLHKTFSEDLDFQIEELELMIKNKKILEREIKAHNEKISKIIKDSRDSTTPTFYFIGIQDDQVYTLEIPNEWEPVWNLLKSYPNGLLLKDFIDKQTFVTKEAFLSTLTDLNKYGVVGLFPKN.

Residues 43–78 adopt a coiled-coil conformation; that stretch reads KDRKELYSLNNDSIKKKLNQLKDETNQLLKERGEEL. The interval 152 to 171 is disordered; that stretch reads LTSGGANKKKSPFLEDNNNK. A coiled-coil region spans residues 694-733; sequence EDLDFQIEELELMIKNKKILEREIKAHNEKISKIIKDSRD.

The protein localises to the mitochondrion. Its function is as follows. Required for efficient chemotaxis. This chain is Protein tortoise (torA), found in Dictyostelium discoideum (Social amoeba).